The primary structure comprises 167 residues: Ion-translocating oxidoreductase complex subunit B (167 aa).

The tract at residues 1 to 22 is hydrophobic; the sequence is MITLIIFSFLSFLLGIILSFTA. A 4Fe-4S domain is found at 28–87; sequence QEDPIVAIVNELLPQSQCAQCGYSGCYPYAKAIVENSEKINKCIPGGTDLISAISSVLSI. [4Fe-4S] cluster-binding residues include Cys-45, Cys-48, Cys-53, Cys-70, Cys-113, Cys-116, Cys-119, Cys-123, Cys-143, Cys-146, Cys-149, and Cys-153. 2 4Fe-4S ferredoxin-type domains span residues 104–133 and 134–163; these read NTVL…GAPN and FIHT…IKKE.

The protein belongs to the 4Fe4S bacterial-type ferredoxin family. RnfB subfamily. The complex is composed of six subunits: RnfA, RnfB, RnfC, RnfD, RnfE and RnfG. Requires [4Fe-4S] cluster as cofactor.

The protein localises to the cell inner membrane. Its function is as follows. Part of a membrane-bound complex that couples electron transfer with translocation of ions across the membrane. The polypeptide is Ion-translocating oxidoreductase complex subunit B (Buchnera aphidicola subsp. Acyrthosiphon pisum (strain 5A)).